Reading from the N-terminus, the 328-residue chain is Interleukin-12 subunit beta (328 aa).

The signal sequence occupies residues 1 to 22; that stretch reads MCHQQLVISWFSLVFLASPLVA. The 84-residue stretch at 23 to 106 folds into the Ig-like C2-type domain; it reads IWELKKDVYV…LSHSLLLLHK (84 aa). 3 disulfides stabilise this stretch: Cys50–Cys90, Cys131–Cys142, and Cys170–Cys193. N-linked (GlcNAc...) asparagine glycosylation is present at Asn135. Asn222 carries N-linked (GlcNAc...) asparagine glycosylation. A Fibronectin type-III domain is found at 237 to 328; that stretch reads PPKNLQLKPL…WSEWASVPCS (92 aa). A disulfide bond links Cys300 and Cys327. Trp319 carries a C-linked (Man) tryptophan glycan.

It belongs to the IL-12B family. As to quaternary structure, heterodimer with IL12A; disulfide-linked. The heterodimer is known as interleukin IL-12. Heterodimer with IL23A; disulfide-linked. The heterodimer is known as interleukin IL-23. Also secreted as a monomer. Interacts with NBR1; this interaction promotes IL-12 secretion. Post-translationally, known to be C-mannosylated in the recombinant protein; it is not yet known for sure if the wild-type protein is also modified.

The protein localises to the secreted. In terms of biological role, cytokine that can act as a growth factor for activated T and NK cells, enhance the lytic activity of NK/lymphokine-activated killer cells, and stimulate the production of IFN-gamma by resting PBMC. Functionally, associates with IL23A to form the IL-23 interleukin, a heterodimeric cytokine which functions in innate and adaptive immunity. IL-23 may constitute with IL-17 an acute response to infection in peripheral tissues. IL-23 binds to a heterodimeric receptor complex composed of IL12RB1 and IL23R, activates the Jak-Stat signaling cascade, stimulates memory rather than naive T-cells and promotes production of pro-inflammatory cytokines. IL-23 induces autoimmune inflammation and thus may be responsible for autoimmune inflammatory diseases and may be important for tumorigenesis. The sequence is that of Interleukin-12 subunit beta (IL12B) from Homo sapiens (Human).